The primary structure comprises 566 residues: Endoglucanase B (566 aa).

The N-terminal stretch at 1–30 (MKKRRSSKVILSLAIVVALLAAVEPNAALA) is a signal peptide. The active-site Proton donor is Glu177. Glu299 functions as the Nucleophile in the catalytic mechanism.

Belongs to the glycosyl hydrolase 5 (cellulase A) family.

It carries out the reaction Endohydrolysis of (1-&gt;4)-beta-D-glucosidic linkages in cellulose, lichenin and cereal beta-D-glucans.. The protein is Endoglucanase B (celB) of Paenibacillus lautus (Bacillus lautus).